A 494-amino-acid polypeptide reads, in one-letter code: Serine/threonine-protein kinase PBL13 (494 aa).

A lipid anchor (S-palmitoyl cysteine) is attached at Cys-4. Thr-65 is modified (phosphothreonine). The region spanning 76–356 is the Protein kinase domain; sequence FSSSNFLGEG…STVVSVLQDI (281 aa). ATP contacts are provided by residues 82-90 and Lys-111; that span reads LGEGGFGPV. Position 156 is a phosphotyrosine (Tyr-156). Catalysis depends on Asp-206, which acts as the Proton acceptor. Ser-210 is modified (phosphoserine). Ser-240 bears the Phosphoserine; by autocatalysis mark. 2 positions are modified to phosphothreonine: Thr-241 and Thr-246. Tyr-254 carries the post-translational modification Phosphotyrosine. Position 321 is a phosphoserine; by autocatalysis (Ser-321). 2 positions are modified to phosphothreonine; by autocatalysis: Thr-323 and Thr-383. A Phosphoserine; by autocatalysis modification is found at Ser-384. Residues Thr-395, Thr-398, Thr-406, Thr-413, Thr-421, and Thr-428 each carry the phosphothreonine; by autocatalysis modification. Ser-429 is modified (phosphoserine; by autocatalysis). The segment at 434-471 is disordered; it reads DKTRREVKETSLQNFDKPRNVSTTDNHQKFRSPAHTAR. Residue Thr-443 is modified to Phosphothreonine; by autocatalysis. Residues 443-458 show a composition bias toward polar residues; sequence TSLQNFDKPRNVSTTD. Phosphoserine; by autocatalysis is present on residues Ser-444 and Ser-455. Position 456 is a phosphothreonine; by autocatalysis (Thr-456). Residues 462–471 show a composition bias toward basic residues; it reads KFRSPAHTAR. Tyr-481 bears the Phosphotyrosine; by autocatalysis mark.

Belongs to the protein kinase superfamily. Ser/Thr protein kinase family. Interacts with RBHOD. Interaction is disrupted by flagellin-induced immune signaling.

It is found in the cell membrane. The enzyme catalyses L-seryl-[protein] + ATP = O-phospho-L-seryl-[protein] + ADP + H(+). It carries out the reaction L-threonyl-[protein] + ATP = O-phospho-L-threonyl-[protein] + ADP + H(+). Involved in defense responses. Acts as a negative regulator of plant immune responses. The polypeptide is Serine/threonine-protein kinase PBL13 (Arabidopsis thaliana (Mouse-ear cress)).